The following is an 80-amino-acid chain: Small ribosomal subunit protein bS16 (80 aa).

It belongs to the bacterial ribosomal protein bS16 family.

This Hydrogenovibrio crunogenus (strain DSM 25203 / XCL-2) (Thiomicrospira crunogena) protein is Small ribosomal subunit protein bS16.